Consider the following 275-residue polypeptide: Penicillin-insensitive murein endopeptidase (275 aa).

A signal peptide spans M1–A19. Disulfide bonds link C44–C264, C187–C235, and C216–C223. 5 residues coordinate Zn(2+): H110, H113, D120, D147, and H211. The tract at residues D227–P262 is disordered. The segment covering Q244–P262 has biased composition (pro residues).

It belongs to the peptidase M74 family. In terms of assembly, dimer. The cofactor is Zn(2+).

The protein resides in the periplasm. In terms of biological role, murein endopeptidase that cleaves the D-alanyl-meso-2,6-diamino-pimelyl amide bond that connects peptidoglycan strands. Likely plays a role in the removal of murein from the sacculus. The polypeptide is Penicillin-insensitive murein endopeptidase (Yersinia pestis).